Consider the following 434-residue polypeptide: Zinc finger protein Pegasus (434 aa).

The interval 33–57 is disordered; it reads VSSDKEAETLQGAGTDSDQNGLDHP. 3 consecutive C2H2-type zinc fingers follow at residues 82–104, 110–132, and 138–161; these read LKCR…IRIH, HRCH…MRSH, and YKCE…RRKH. Residues 260–274 show a composition bias toward polar residues; it reads GQLSSLPPDTQNPAS. A disordered region spans residues 260–357; that stretch reads GQLSSLPPDT…PSTPAPALPA (98 aa). Positions 296–313 are enriched in low complexity; it reads CASAVSTSVAQSSSPASP. The span at 337–349 shows a compositional bias: polar residues; the sequence is RTSTPSISNSQPS. 2 C2H2-type zinc fingers span residues 364 to 386 and 392 to 419; these read HHCQ…MGCH and FQCN…CCQH.

It belongs to the Ikaros C2H2-type zinc-finger protein family. Probably self-associates.

The protein resides in the nucleus. Transcriptional repressor that binds the core 5'GNNTGTNG-3' DNA consensus sequence. This Xenopus tropicalis (Western clawed frog) protein is Zinc finger protein Pegasus (ikzf5).